Reading from the N-terminus, the 527-residue chain is Zinc finger CCCH-type with G patch domain-containing protein (527 aa).

The interval Gly-97 to Asp-126 is disordered. Residues Asp-111 to Val-125 show a composition bias toward acidic residues. A C3H1-type zinc finger spans residues Gln-173–Val-200. The segment at Leu-268–Gly-312 is disordered. Residues Thr-317–Glu-363 enclose the G-patch domain. Disordered stretches follow at residues Thr-369–Thr-396, Leu-410–Gly-444, and Lys-505–Phe-527. Over residues Arg-384–Ala-393 the composition is skewed to basic residues. Residues Ala-511 to Phe-527 are compositionally biased toward basic and acidic residues.

It is found in the nucleus. Functionally, transcription repressor that specifically binds the 5'-GGAG[GA]A[GA]A-3' consensus sequence. Represses transcription by recruiting the chromatin multiprotein complex NuRD to target promoters. Negatively regulates expression of EGFR, a gene involved in cell proliferation, survival and migration. The protein is Zinc finger CCCH-type with G patch domain-containing protein (zgpat) of Salmo salar (Atlantic salmon).